We begin with the raw amino-acid sequence, 327 residues long: Mycothiol acetyltransferase (327 aa).

2 consecutive N-acetyltransferase domains span residues 11–159 and 162–327; these read EPHG…VTLP and VQIR…EGTS. Glutamate 42 is a 1D-myo-inositol 2-(L-cysteinylamino)-2-deoxy-alpha-D-glucopyranoside binding site. Position 89 to 91 (89 to 91) interacts with acetyl-CoA; sequence LVI. Positions 189, 228, and 251 each coordinate 1D-myo-inositol 2-(L-cysteinylamino)-2-deoxy-alpha-D-glucopyranoside. Residues 255–257 and 262–268 contribute to the acetyl-CoA site; these read LGV and QGLGLGR. Tyrosine 289 contributes to the 1D-myo-inositol 2-(L-cysteinylamino)-2-deoxy-alpha-D-glucopyranoside binding site. 294-299 lines the acetyl-CoA pocket; it reads NAPAIR.

The protein belongs to the acetyltransferase family. MshD subfamily. Monomer.

The catalysed reaction is 1D-myo-inositol 2-(L-cysteinylamino)-2-deoxy-alpha-D-glucopyranoside + acetyl-CoA = mycothiol + CoA + H(+). Functionally, catalyzes the transfer of acetyl from acetyl-CoA to desacetylmycothiol (Cys-GlcN-Ins) to form mycothiol. In Acidothermus cellulolyticus (strain ATCC 43068 / DSM 8971 / 11B), this protein is Mycothiol acetyltransferase.